A 302-amino-acid polypeptide reads, in one-letter code: 4-diphosphocytidyl-2-C-methyl-D-erythritol kinase (302 aa).

Residue K32 is part of the active site. Residue 115-125 participates in ATP binding; it reads PMGGGVGGGSS. D157 is an active-site residue.

This sequence belongs to the GHMP kinase family. IspE subfamily.

The catalysed reaction is 4-CDP-2-C-methyl-D-erythritol + ATP = 4-CDP-2-C-methyl-D-erythritol 2-phosphate + ADP + H(+). The protein operates within isoprenoid biosynthesis; isopentenyl diphosphate biosynthesis via DXP pathway; isopentenyl diphosphate from 1-deoxy-D-xylulose 5-phosphate: step 3/6. Functionally, catalyzes the phosphorylation of the position 2 hydroxy group of 4-diphosphocytidyl-2C-methyl-D-erythritol. This is 4-diphosphocytidyl-2-C-methyl-D-erythritol kinase from Actinobacillus succinogenes (strain ATCC 55618 / DSM 22257 / CCUG 43843 / 130Z).